A 71-amino-acid polypeptide reads, in one-letter code: Large ribosomal subunit protein eL38 (71 aa).

Belongs to the eukaryotic ribosomal protein eL38 family.

The sequence is that of Large ribosomal subunit protein eL38 (RpL38) from Ixodes scapularis (Black-legged tick).